The sequence spans 819 residues: Probable cadmium/zinc-transporting ATPase HMA1, chloroplastic (819 aa).

The N-terminal 17 residues, 1 to 17 (MEPATLTRSSSLTRFPY), are a transit peptide targeting the chloroplast. Residues 18-122 (RRGLSTLRLA…IGWVRLANYL (105 aa)) are Stromal-facing. Residues 66 to 79 (DHHHDHHHDDEQDH) are compositionally biased toward basic and acidic residues. The segment at 66–87 (DHHHDHHHDDEQDHHNHHHHHH) is disordered. The helical transmembrane segment at 123–144 (REHLHLCCSAAAMFLAAAVCPY) threads the bilayer. Residues 145–153 (LAPEPYIKS) lie on the Lumenal side of the membrane. A helical membrane pass occupies residues 154-173 (LQNAFMIVGFPLVGVSASLD). Over 174 to 180 (ALMDIAG) the chain is Stromal. Residues 181 to 201 (GKVNIHVLMALAAFASVFMGN) form a helical membrane-spanning segment. Residue Ala202 is a topological domain, lumenal. Residues 203–223 (LEGGLLLAMFNLAHIAEEFFT) traverse the membrane as a helical segment. The Stromal portion of the chain corresponds to 224 to 361 (SRSMVDVKEL…KPKLQRWLDE (138 aa)). The chain crosses the membrane as a helical span at residues 362-384 (FGENYSKVVVVLSLAIAFLGPFL). Residues 385 to 398 (FKWPFLSTAACRGS) are Lumenal-facing. The helical transmembrane segment at 399 to 416 (VYRALGLMVAASPCALAV) threads the bilayer. Topologically, residues 417-737 (APLAYATAIS…AKSRQTTSLV (321 aa)) are stromal. Asp453 (4-aspartylphosphate intermediate) is an active-site residue. Residues Glu682 and Asp686 each coordinate Mg(2+). The helical transmembrane segment at 738–757 (KQNVALALTSIFLAALPSVL) threads the bilayer. Residues 758–762 (GFVPL) are Lumenal-facing. The chain crosses the membrane as a helical span at residues 763 to 781 (WLTVLLHEGGTLLVCLNSV). The Stromal portion of the chain corresponds to 782–819 (RGLNDPSWSWKQDIVHLINKLRSQEPTSSSSNSLSSAH).

This sequence belongs to the cation transport ATPase (P-type) (TC 3.A.3) family. Type IB subfamily.

It is found in the plastid. The protein localises to the chloroplast inner membrane. It carries out the reaction Zn(2+)(in) + ATP + H2O = Zn(2+)(out) + ADP + phosphate + H(+). The enzyme catalyses Cd(2+)(in) + ATP + H2O = Cd(2+)(out) + ADP + phosphate + H(+). Functionally, involved in cadmium/zinc transport. In Arabidopsis thaliana (Mouse-ear cress), this protein is Probable cadmium/zinc-transporting ATPase HMA1, chloroplastic (HMA1).